Reading from the N-terminus, the 859-residue chain is MSAHAAPSPEALSRRAEFKAAKADLLERFRSATNVTSLMHALSKLTDSALKRVWDDCGLPATLALVAVGGYGRGELAPHSDVDILVLLPDAHDPALDARIERFIGMAWDLGLEIGSSVRTVAQCIEEASQDVTVQTSLLEARRIFGSTALFERFTVRYHEEALDARAFFTAKVLEMRQRHAKFQDTPYSLEPNVKESPGGLRDLQTILWIARAAGFGSSWRELDTRGLITEREARELRRNEGFLKALRARLHVIAGRRQDVLVFDLQTQAAESFGYRPTQAKRASEQLMRRYYWAAKAVTQLATILIQNIEAQLFPATSGITRVLSHDRFVEKQGMLEIVDDGVFERHPDAILEAFLLYETTRGVKGLSARTLRALYNSREIMNDTWRRDAQNRHTFMQILQQPEGITHAFRLMNQTSVLGRYLLNFRRIVGQMQHDLYHVYTVDQHILMVLRNIRRFAVAEHAHEYPFCSQLIGNFERPWVLYVAALFHDIAKGRGGDHSTLGMADARRFCREHGIGGDDAALIVWLVQHHLTMSQVAQKQDTSDPEVIKRFAAIVGNERYLTALYLLTVADIRGTSPKVWNTWKGKLLEDLYRITLAVLGGAKPDAHSELKSRQEQALALLRLETVPDDAHRALWDQLDVGFFLRHDAADIAWQTRVLYRHVNAETAIVRARPSPIGDALQVLVYVKDRPDLFAGICAYFDRNGLSVLDARVSTTRHGYALDNFIVTQTERDVRYRDIANLVEQQLATRLAETAPLPEPSKGRLSRLSRTFPITPRVDLRADERGQYYILSVSANDRPGLLYSIARVLAEHRVGVHAARINTLGERVEDIFLLDGAGLSDNRLQIQLETELLRAIAV.

A uridylyltransferase region spans residues 1–325 (MSAHAAPSPE…PATSGITRVL (325 aa)). The segment at 326-682 (SHDRFVEKQG…ARPSPIGDAL (357 aa)) is uridylyl-removing. The HD domain maps to 444–566 (VDQHILMVLR…VGNERYLTAL (123 aa)). ACT domains are found at residues 683–762 (QVLV…PEPS) and 791–859 (ILSV…AIAV).

The protein belongs to the GlnD family. Mg(2+) is required as a cofactor.

It catalyses the reaction [protein-PII]-L-tyrosine + UTP = [protein-PII]-uridylyl-L-tyrosine + diphosphate. The catalysed reaction is [protein-PII]-uridylyl-L-tyrosine + H2O = [protein-PII]-L-tyrosine + UMP + H(+). Uridylyltransferase (UTase) activity is inhibited by glutamine, while glutamine activates uridylyl-removing (UR) activity. In terms of biological role, modifies, by uridylylation and deuridylylation, the PII regulatory proteins (GlnB and homologs), in response to the nitrogen status of the cell that GlnD senses through the glutamine level. Under low glutamine levels, catalyzes the conversion of the PII proteins and UTP to PII-UMP and PPi, while under higher glutamine levels, GlnD hydrolyzes PII-UMP to PII and UMP (deuridylylation). Thus, controls uridylylation state and activity of the PII proteins, and plays an important role in the regulation of nitrogen fixation and metabolism. This is Bifunctional uridylyltransferase/uridylyl-removing enzyme from Burkholderia vietnamiensis (strain G4 / LMG 22486) (Burkholderia cepacia (strain R1808)).